The following is a 318-amino-acid chain: Beta-ketoacyl-[acyl-carrier-protein] synthase III (318 aa).

Residues C113 and H245 contribute to the active site. The segment at Q246–R250 is ACP-binding. N275 is a catalytic residue.

Belongs to the thiolase-like superfamily. FabH family. In terms of assembly, homodimer.

The protein resides in the cytoplasm. It catalyses the reaction malonyl-[ACP] + acetyl-CoA + H(+) = 3-oxobutanoyl-[ACP] + CO2 + CoA. The protein operates within lipid metabolism; fatty acid biosynthesis. Catalyzes the condensation reaction of fatty acid synthesis by the addition to an acyl acceptor of two carbons from malonyl-ACP. Catalyzes the first condensation reaction which initiates fatty acid synthesis and may therefore play a role in governing the total rate of fatty acid production. Possesses both acetoacetyl-ACP synthase and acetyl transacylase activities. Its substrate specificity determines the biosynthesis of branched-chain and/or straight-chain of fatty acids. This chain is Beta-ketoacyl-[acyl-carrier-protein] synthase III, found in Wolbachia pipientis subsp. Culex pipiens (strain wPip).